Consider the following 322-residue polypeptide: GDSL esterase/lipase At5g03600 (322 aa).

Ser-21 (nucleophile) is an active-site residue. Active-site residues include Asp-295 and His-298.

This sequence belongs to the 'GDSL' lipolytic enzyme family.

The polypeptide is GDSL esterase/lipase At5g03600 (Arabidopsis thaliana (Mouse-ear cress)).